We begin with the raw amino-acid sequence, 246 residues long: Complement C1q tumor necrosis factor-related protein 3 (246 aa).

The first 22 residues, 1–22 (MLWRQLIYWQLLALFFLPFCLC), serve as a signal peptide directing secretion. The 63-residue stretch at 51–113 (GYQGPPGPPG…KGEKGYPGIP (63 aa)) folds into the Collagen-like domain. A disordered region spans residues 53-110 (QGPPGPPGPPGIPGNHGNNGNNGATGHEGAKGEKGDKGDLGPRGERGQHGPKGEKGYP). Residues 55–64 (PPGPPGPPGI) are compositionally biased toward pro residues. The span at 65–74 (PGNHGNNGNN) shows a compositional bias: low complexity. Asn70 carries an N-linked (GlcNAc...) asparagine glycan. A compositionally biased stretch (basic and acidic residues) spans 80–107 (EGAKGEKGDKGDLGPRGERGQHGPKGEK). The 134-residue stretch at 113–246 (PPELQIAFMA…FAGFLLFETK (134 aa)) folds into the C1q domain.

Post-translationally, glycosylated on Asn-70. In terms of tissue distribution, expressed in colon and small intestine.

The protein localises to the secreted. The sequence is that of Complement C1q tumor necrosis factor-related protein 3 (C1QTNF3) from Homo sapiens (Human).